Here is a 379-residue protein sequence, read N- to C-terminus: Cytochrome b (379 aa).

A run of 4 helical transmembrane segments spans residues F33 to M53, W77 to V98, W113 to L133, and F178 to L198. Residues H83 and H97 each contribute to the heme b site. The heme b site is built by H182 and H196. H201 contributes to the a ubiquinone binding site. A run of 4 helical transmembrane segments spans residues I226–S246, L288–H308, L320–G340, and F347–P367.

Belongs to the cytochrome b family. As to quaternary structure, the cytochrome bc1 complex contains 11 subunits: 3 respiratory subunits (MT-CYB, CYC1 and UQCRFS1), 2 core proteins (UQCRC1 and UQCRC2) and 6 low-molecular weight proteins (UQCRH/QCR6, UQCRB/QCR7, UQCRQ/QCR8, UQCR10/QCR9, UQCR11/QCR10 and a cleavage product of UQCRFS1). This cytochrome bc1 complex then forms a dimer. Heme b is required as a cofactor.

It localises to the mitochondrion inner membrane. In terms of biological role, component of the ubiquinol-cytochrome c reductase complex (complex III or cytochrome b-c1 complex) that is part of the mitochondrial respiratory chain. The b-c1 complex mediates electron transfer from ubiquinol to cytochrome c. Contributes to the generation of a proton gradient across the mitochondrial membrane that is then used for ATP synthesis. The polypeptide is Cytochrome b (MT-CYB) (Chrotogale owstoni (Owston's palm civet)).